Consider the following 153-residue polypeptide: Regulatory protein RecX (153 aa).

Belongs to the RecX family.

It localises to the cytoplasm. Its function is as follows. Modulates RecA activity. This Neisseria gonorrhoeae (strain ATCC 700825 / FA 1090) protein is Regulatory protein RecX.